Here is a 483-residue protein sequence, read N- to C-terminus: Regulatory protein ViaA (483 aa).

It belongs to the ViaA family. As to quaternary structure, homodimer. Interacts with RavA.

It localises to the cytoplasm. Its function is as follows. Component of the RavA-ViaA chaperone complex, which may act on the membrane to optimize the function of some of the respiratory chains. ViaA stimulates the ATPase activity of RavA. This Escherichia coli (strain SMS-3-5 / SECEC) protein is Regulatory protein ViaA.